We begin with the raw amino-acid sequence, 156 residues long: Crossover junction endodeoxyribonuclease RuvC (156 aa).

Active-site residues include Asp7, Glu66, and Asp138. 3 residues coordinate Mg(2+): Asp7, Glu66, and Asp138.

Belongs to the RuvC family. In terms of assembly, homodimer which binds Holliday junction (HJ) DNA. The HJ becomes 2-fold symmetrical on binding to RuvC with unstacked arms; it has a different conformation from HJ DNA in complex with RuvA. In the full resolvosome a probable DNA-RuvA(4)-RuvB(12)-RuvC(2) complex forms which resolves the HJ. Requires Mg(2+) as cofactor.

Its subcellular location is the cytoplasm. The enzyme catalyses Endonucleolytic cleavage at a junction such as a reciprocal single-stranded crossover between two homologous DNA duplexes (Holliday junction).. In terms of biological role, the RuvA-RuvB-RuvC complex processes Holliday junction (HJ) DNA during genetic recombination and DNA repair. Endonuclease that resolves HJ intermediates. Cleaves cruciform DNA by making single-stranded nicks across the HJ at symmetrical positions within the homologous arms, yielding a 5'-phosphate and a 3'-hydroxyl group; requires a central core of homology in the junction. The consensus cleavage sequence is 5'-(A/T)TT(C/G)-3'. Cleavage occurs on the 3'-side of the TT dinucleotide at the point of strand exchange. HJ branch migration catalyzed by RuvA-RuvB allows RuvC to scan DNA until it finds its consensus sequence, where it cleaves and resolves the cruciform DNA. In Ehrlichia canis (strain Jake), this protein is Crossover junction endodeoxyribonuclease RuvC.